The chain runs to 874 residues: Coatomer subunit gamma-1 (874 aa).

Positions 1–11 (MLKKFDKKDEE) are enriched in basic and acidic residues. The disordered stretch occupies residues 1–21 (MLKKFDKKDEESGGGSNPFQH). HEAT repeat units lie at residues 64 to 101 (TEATEAFFAMTKLFQSNDPTLRRMCYLTIKEMSCIAED), 283 to 320 (KELAPAVSVLQLFCSSPKAALRYAAVRTLNKVAMKHPS), 322 to 355 (VTACNLDLENLVTDSNRSIATLAITTLLKTGSES), and 356 to 392 (SIDRLMKQISSFMSEISDEFKVVVVQAISALCQKYPR). The residue at position 594 (threonine 594) is a Phosphothreonine. Residues 609-874 (RQEIFQEQLA…PVDIILASVG (266 aa)) form an interaction with ZNF289/ARFGAP2 region.

It belongs to the COPG family. Oligomeric complex that consists of at least the alpha, beta, beta', gamma, delta, epsilon and zeta subunits. Interacts with ZNF289/ARFGAP2 through its C-terminal appendage domain. Interacts with EGFR upon EGF treatment; interaction is essential for regulation of EGF-dependent nuclear transport of EGFR by retrograde trafficking from the Golgi to the ER. The coatomer interacts with KDEL receptors; the interaction is important for retrograde trafficking of KDEL-bearing proteins from the Golgi to the endoplasmic reticulum. Interacts with COPB1. Interacts with TMED10 (via C-terminus). Interacts with TMED2, TMED3, TMED7 and TMED9.

It localises to the cytoplasm. Its subcellular location is the golgi apparatus membrane. It is found in the cytoplasmic vesicle. The protein localises to the COPI-coated vesicle membrane. Its function is as follows. The coatomer is a cytosolic protein complex that binds to dilysine motifs and reversibly associates with Golgi non-clathrin-coated vesicles, which further mediate biosynthetic protein transport from the ER, via the Golgi up to the trans Golgi network. Coatomer complex is required for budding from Golgi membranes, and is essential for the retrograde Golgi-to-ER transport of dilysine-tagged proteins. In mammals, the coatomer can only be recruited by membranes associated to ADP-ribosylation factors (ARFs), which are small GTP-binding proteins; the complex also influences the Golgi structural integrity, as well as the processing, activity, and endocytic recycling of LDL receptors. Required for limiting lipid storage in lipid droplets. Involved in lipid homeostasis by regulating the presence of perilipin family members PLIN2 and PLIN3 at the lipid droplet surface and promoting the association of adipocyte triglyceride lipase (PNPLA2) with the lipid droplet surface to mediate lipolysis. The sequence is that of Coatomer subunit gamma-1 (COPG1) from Homo sapiens (Human).